A 511-amino-acid chain; its full sequence is Pickpocket protein 19 (511 aa).

The next 2 membrane-spanning stretches (helical) occupy residues 59-79 (LWLAIVLGAVITGFSLYTVLM) and 471-491 (GIISLYIGASVMSFIELLFVL).

This sequence belongs to the amiloride-sensitive sodium channel (TC 1.A.6) family. In terms of tissue distribution, expressed in the tracheal system. Expressed in the taste-sensing terminal organ of the larval head. In adults, expressed in hairs on the tibia, femur and wing margin, but not in hairs on the tarsi of the leg.

It is found in the membrane. Part of a complex that plays a role in tracheal liquid clearance. In both larvae and adults, contributes to the behavioral response to salt. Probable role in sodium transport. This is Pickpocket protein 19 (ppk19) from Drosophila melanogaster (Fruit fly).